Reading from the N-terminus, the 244-residue chain is 23S rRNA (guanosine-2'-O-)-methyltransferase RlmB (244 aa).

The S-adenosyl-L-methionine site is built by G196, I216, and L225.

This sequence belongs to the class IV-like SAM-binding methyltransferase superfamily. RNA methyltransferase TrmH family. RlmB subfamily. In terms of assembly, homodimer.

It localises to the cytoplasm. It carries out the reaction guanosine(2251) in 23S rRNA + S-adenosyl-L-methionine = 2'-O-methylguanosine(2251) in 23S rRNA + S-adenosyl-L-homocysteine + H(+). Functionally, specifically methylates the ribose of guanosine 2251 in 23S rRNA. This is 23S rRNA (guanosine-2'-O-)-methyltransferase RlmB from Photorhabdus laumondii subsp. laumondii (strain DSM 15139 / CIP 105565 / TT01) (Photorhabdus luminescens subsp. laumondii).